A 489-amino-acid polypeptide reads, in one-letter code: Nuclear distribution protein PAC1 (489 aa).

A coiled-coil region spans residues 66-98 (STVLRLQKKIIDLENEISNLNNIINSSNSDNNG). 7 WD repeats span residues 119–158 (QCEN…NTIP), 164–205 (AHTR…RTLN), 206–246 (GHEH…SLKS), 249–291 (GHSE…GLAM), 328–368 (IPLE…IAPH), 389–428 (GHSS…ETGS), and 437–486 (GHDG…NSIK).

This sequence belongs to the WD repeat LIS1/nudF family. In terms of assembly, self-associates. Interacts with NDL1 and dynein.

It localises to the cytoplasm. Its subcellular location is the cytoskeleton. The protein resides in the spindle pole. Its function is as follows. Positively regulates the activity of the minus-end directed microtubule motor protein dynein. Plays a central role in positioning the mitotic spindle at the bud neck during cell division. Targets cytoplasmic dynein to microtubule plus ends, thereby promoting dynein-mediated microtubule sliding along the bud cortex and consequently the movement of the mitotic spindle to the bud neck. The sequence is that of Nuclear distribution protein PAC1 from Candida dubliniensis (strain CD36 / ATCC MYA-646 / CBS 7987 / NCPF 3949 / NRRL Y-17841) (Yeast).